A 428-amino-acid chain; its full sequence is Dihydroorotase (428 aa).

His-59 and His-61 together coordinate Zn(2+). Residues 61–63 (HLR) and Asn-93 each bind substrate. Zn(2+)-binding residues include Asp-151, His-178, and His-231. Asn-277 is a substrate binding site. Asp-304 contacts Zn(2+). Residue Asp-304 is part of the active site. Substrate is bound by residues His-308 and 322–323 (FG).

The protein belongs to the metallo-dependent hydrolases superfamily. DHOase family. Class I DHOase subfamily. The cofactor is Zn(2+).

The enzyme catalyses (S)-dihydroorotate + H2O = N-carbamoyl-L-aspartate + H(+). It participates in pyrimidine metabolism; UMP biosynthesis via de novo pathway; (S)-dihydroorotate from bicarbonate: step 3/3. Functionally, catalyzes the reversible cyclization of carbamoyl aspartate to dihydroorotate. This Bacillus cereus (strain AH187) protein is Dihydroorotase.